We begin with the raw amino-acid sequence, 254 residues long: Phosphatidylglycerol--prolipoprotein diacylglyceryl transferase (254 aa).

The next 4 membrane-spanning stretches (helical) occupy residues 11–31 (LAIR…LLLA), 49–69 (FLIA…IFEF), 84–104 (QGGL…YIYL), and 109–129 (ESFF…QAIG). Position 130 (Arg130) interacts with a 1,2-diacyl-sn-glycero-3-phospho-(1'-sn-glycerol). The next 3 membrane-spanning stretches (helical) occupy residues 169-189 (PTFL…VYLL), 196-216 (GIVF…IEGL), and 228-248 (VAQL…YNII).

The protein belongs to the Lgt family.

Its subcellular location is the cell membrane. The enzyme catalyses L-cysteinyl-[prolipoprotein] + a 1,2-diacyl-sn-glycero-3-phospho-(1'-sn-glycerol) = an S-1,2-diacyl-sn-glyceryl-L-cysteinyl-[prolipoprotein] + sn-glycerol 1-phosphate + H(+). Its pathway is protein modification; lipoprotein biosynthesis (diacylglyceryl transfer). Its function is as follows. Catalyzes the transfer of the diacylglyceryl group from phosphatidylglycerol to the sulfhydryl group of the N-terminal cysteine of a prolipoprotein, the first step in the formation of mature lipoproteins. The sequence is that of Phosphatidylglycerol--prolipoprotein diacylglyceryl transferase from Clostridium botulinum (strain ATCC 19397 / Type A).